Reading from the N-terminus, the 140-residue chain is Nucleoside diphosphate kinase (140 aa).

ATP contacts are provided by Lys11, Phe59, Arg87, Thr93, Arg104, and Asn114. His117 serves as the catalytic Pros-phosphohistidine intermediate.

This sequence belongs to the NDK family. In terms of assembly, homotetramer. It depends on Mg(2+) as a cofactor.

The protein resides in the cytoplasm. The enzyme catalyses a 2'-deoxyribonucleoside 5'-diphosphate + ATP = a 2'-deoxyribonucleoside 5'-triphosphate + ADP. It catalyses the reaction a ribonucleoside 5'-diphosphate + ATP = a ribonucleoside 5'-triphosphate + ADP. Functionally, major role in the synthesis of nucleoside triphosphates other than ATP. The ATP gamma phosphate is transferred to the NDP beta phosphate via a ping-pong mechanism, using a phosphorylated active-site intermediate. This Methylocella silvestris (strain DSM 15510 / CIP 108128 / LMG 27833 / NCIMB 13906 / BL2) protein is Nucleoside diphosphate kinase.